The primary structure comprises 325 residues: Holliday junction branch migration complex subunit RuvB (325 aa).

The interval 1 to 180 is large ATPase domain (RuvB-L); sequence MKNQLLDAKV…FGIHLKLNFY (180 aa). ATP-binding positions include leucine 19, arginine 20, glycine 61, lysine 64, threonine 65, threonine 66, 127 to 129, arginine 170, tyrosine 180, and arginine 217; that span reads EDF. Residue threonine 65 coordinates Mg(2+). A small ATPAse domain (RuvB-S) region spans residues 181 to 251; the sequence is SCEELTKIVE…ITDYALNQLG (71 aa). Positions 254–325 are head domain (RuvB-H); that stretch reads KLGLDSSDHK…ITANALKHLH (72 aa). Residues arginine 290, arginine 309, and arginine 314 each contribute to the DNA site.

It belongs to the RuvB family. Homohexamer. Forms an RuvA(8)-RuvB(12)-Holliday junction (HJ) complex. HJ DNA is sandwiched between 2 RuvA tetramers; dsDNA enters through RuvA and exits via RuvB. An RuvB hexamer assembles on each DNA strand where it exits the tetramer. Each RuvB hexamer is contacted by two RuvA subunits (via domain III) on 2 adjacent RuvB subunits; this complex drives branch migration. In the full resolvosome a probable DNA-RuvA(4)-RuvB(12)-RuvC(2) complex forms which resolves the HJ.

Its subcellular location is the cytoplasm. The enzyme catalyses ATP + H2O = ADP + phosphate + H(+). Its function is as follows. The RuvA-RuvB-RuvC complex processes Holliday junction (HJ) DNA during genetic recombination and DNA repair, while the RuvA-RuvB complex plays an important role in the rescue of blocked DNA replication forks via replication fork reversal (RFR). RuvA specifically binds to HJ cruciform DNA, conferring on it an open structure. The RuvB hexamer acts as an ATP-dependent pump, pulling dsDNA into and through the RuvAB complex. RuvB forms 2 homohexamers on either side of HJ DNA bound by 1 or 2 RuvA tetramers; 4 subunits per hexamer contact DNA at a time. Coordinated motions by a converter formed by DNA-disengaged RuvB subunits stimulates ATP hydrolysis and nucleotide exchange. Immobilization of the converter enables RuvB to convert the ATP-contained energy into a lever motion, pulling 2 nucleotides of DNA out of the RuvA tetramer per ATP hydrolyzed, thus driving DNA branch migration. The RuvB motors rotate together with the DNA substrate, which together with the progressing nucleotide cycle form the mechanistic basis for DNA recombination by continuous HJ branch migration. Branch migration allows RuvC to scan DNA until it finds its consensus sequence, where it cleaves and resolves cruciform DNA. The protein is Holliday junction branch migration complex subunit RuvB of Orientia tsutsugamushi (strain Ikeda) (Rickettsia tsutsugamushi).